The following is a 188-amino-acid chain: Protein SYC1 (188 aa).

Component of the cleavage and polyadenylation factor (CPF) complex, which is composed of at least PTI1, SYC1, SSU72, GLC7, MPE1, REF2, PFS2, PTA1, YSH1/BRR5, SWD2, CFT2/YDH1, YTH1, CFT1/YHH1, FIP1 and PAP1. Component of the APT complex, which is a subcomplex of CPF, and is composed of PTI1, SYC1, SSU72, GLC7, REF2, PTA1 and SWD2.

The protein resides in the nucleus. Its function is as follows. Component of the cleavage and polyadenylation factor (CPF) complex, which plays a key role in polyadenylation-dependent pre-mRNA 3'-end formation and cooperates with cleavage factors including the CFIA complex and NAB4/CFIB. Component of the APT complex, which may be involved in polyadenylation-independent transcript 3'-end formation, including snoRNAs and snRNAs. The protein is Protein SYC1 (SYC1) of Saccharomyces cerevisiae (strain ATCC 204508 / S288c) (Baker's yeast).